We begin with the raw amino-acid sequence, 598 residues long: NADH-quinone oxidoreductase subunit C/D (598 aa).

The NADH dehydrogenase I subunit C stretch occupies residues methionine 1–glutamate 189. Positions aspartate 213–arginine 598 are NADH dehydrogenase I subunit D.

In the N-terminal section; belongs to the complex I 30 kDa subunit family. It in the C-terminal section; belongs to the complex I 49 kDa subunit family. In terms of assembly, NDH-1 is composed of 13 different subunits. Subunits NuoB, CD, E, F, and G constitute the peripheral sector of the complex.

Its subcellular location is the cell inner membrane. It carries out the reaction a quinone + NADH + 5 H(+)(in) = a quinol + NAD(+) + 4 H(+)(out). NDH-1 shuttles electrons from NADH, via FMN and iron-sulfur (Fe-S) centers, to quinones in the respiratory chain. The immediate electron acceptor for the enzyme in this species is believed to be ubiquinone. Couples the redox reaction to proton translocation (for every two electrons transferred, four hydrogen ions are translocated across the cytoplasmic membrane), and thus conserves the redox energy in a proton gradient. This Yersinia pseudotuberculosis serotype O:1b (strain IP 31758) protein is NADH-quinone oxidoreductase subunit C/D.